Consider the following 227-residue polypeptide: Cytochrome c oxidase subunit 2 (227 aa).

The Mitochondrial intermembrane portion of the chain corresponds to 1–14 (MAHRAQVGLQDATS). A helical membrane pass occupies residues 15-45 (PIMEELVIFHDHALMIIFLICFLVLYALFLT). The Mitochondrial matrix portion of the chain corresponds to 46 to 59 (LTTKLTNTNISDAQ). A helical transmembrane segment spans residues 60 to 87 (EMETIWTTLPAIILILIALPSLRILYLT). The Mitochondrial intermembrane portion of the chain corresponds to 88-227 (DEINDPSFTI…IFEMGPVFAL (140 aa)). Cu cation-binding residues include histidine 161, cysteine 196, glutamate 198, cysteine 200, histidine 204, and methionine 207. Residue glutamate 198 participates in Mg(2+) binding.

This sequence belongs to the cytochrome c oxidase subunit 2 family. Component of the cytochrome c oxidase (complex IV, CIV), a multisubunit enzyme composed of 14 subunits. The complex is composed of a catalytic core of 3 subunits MT-CO1, MT-CO2 and MT-CO3, encoded in the mitochondrial DNA, and 11 supernumerary subunits COX4I, COX5A, COX5B, COX6A, COX6B, COX6C, COX7A, COX7B, COX7C, COX8 and NDUFA4, which are encoded in the nuclear genome. The complex exists as a monomer or a dimer and forms supercomplexes (SCs) in the inner mitochondrial membrane with NADH-ubiquinone oxidoreductase (complex I, CI) and ubiquinol-cytochrome c oxidoreductase (cytochrome b-c1 complex, complex III, CIII), resulting in different assemblies (supercomplex SCI(1)III(2)IV(1) and megacomplex MCI(2)III(2)IV(2)). Found in a complex with TMEM177, COA6, COX18, COX20, SCO1 and SCO2. Interacts with TMEM177 in a COX20-dependent manner. Interacts with COX20. Interacts with COX16. Cu cation is required as a cofactor.

It is found in the mitochondrion inner membrane. The catalysed reaction is 4 Fe(II)-[cytochrome c] + O2 + 8 H(+)(in) = 4 Fe(III)-[cytochrome c] + 2 H2O + 4 H(+)(out). Functionally, component of the cytochrome c oxidase, the last enzyme in the mitochondrial electron transport chain which drives oxidative phosphorylation. The respiratory chain contains 3 multisubunit complexes succinate dehydrogenase (complex II, CII), ubiquinol-cytochrome c oxidoreductase (cytochrome b-c1 complex, complex III, CIII) and cytochrome c oxidase (complex IV, CIV), that cooperate to transfer electrons derived from NADH and succinate to molecular oxygen, creating an electrochemical gradient over the inner membrane that drives transmembrane transport and the ATP synthase. Cytochrome c oxidase is the component of the respiratory chain that catalyzes the reduction of oxygen to water. Electrons originating from reduced cytochrome c in the intermembrane space (IMS) are transferred via the dinuclear copper A center (CU(A)) of subunit 2 and heme A of subunit 1 to the active site in subunit 1, a binuclear center (BNC) formed by heme A3 and copper B (CU(B)). The BNC reduces molecular oxygen to 2 water molecules using 4 electrons from cytochrome c in the IMS and 4 protons from the mitochondrial matrix. This chain is Cytochrome c oxidase subunit 2 (MT-CO2), found in Pongo pygmaeus (Bornean orangutan).